Here is a 327-residue protein sequence, read N- to C-terminus: MDLTQGFRARSGVVGPVAGLESLNFSDEFRHLVTTMPPETTGGSFTALLEMPVTQAMELLHFPDSSSSQARTVTSGDISPTTLHPFGALTFPSNSLLLDRAARFSVIATEQNGNFSGETANSLPSNPGANLDRVKAEPAETDSMVENQNQSYSSGKRKEREKKVKSSTKKNKSSVESDKLPYVHVRARRGQATDNHSLAERARREKINARMKLLQELVPGCDKIQGTALVLDEIINHVQTLQRQVEMLSMRLAAVNPRIDFNLDSILASENGSLMDGSFNAESYHQLQQWPFDGYHQPEWGREEDHHQANFSMGSATLHPNQVKMEL.

Residues 137-179 (EPAETDSMVENQNQSYSSGKRKEREKKVKSSTKKNKSSVESDK) are disordered. The bHLH domain maps to 191–241 (QATDNHSLAERARREKINARMKLLQELVPGCDKIQGTALVLDEIINHVQTL).

Homodimer. In terms of tissue distribution, expressed in leaves, stems, and flowers.

It localises to the nucleus. This Arabidopsis thaliana (Mouse-ear cress) protein is Transcription factor bHLH48 (BHLH48).